Here is a 201-residue protein sequence, read N- to C-terminus: Small ribosomal subunit protein uS4c (201 aa).

One can recognise an S4 RNA-binding domain in the interval 89-149 (MRLDNILFRL…DKPKSGALIK (61 aa)).

The protein belongs to the universal ribosomal protein uS4 family. As to quaternary structure, part of the 30S ribosomal subunit. Contacts protein S5. The interaction surface between S4 and S5 is involved in control of translational fidelity.

It localises to the plastid. In terms of biological role, one of the primary rRNA binding proteins, it binds directly to 16S rRNA where it nucleates assembly of the body of the 30S subunit. With S5 and S12 plays an important role in translational accuracy. In Cuscuta reflexa (Southern Asian dodder), this protein is Small ribosomal subunit protein uS4c (rps4).